We begin with the raw amino-acid sequence, 238 residues long: Large ribosomal subunit protein uL5c (238 aa).

It belongs to the universal ribosomal protein uL5 family. As to quaternary structure, part of the 50S ribosomal subunit; contacts the 5S rRNA.

It localises to the plastid. The protein localises to the chloroplast. Binds 5S rRNA, forms part of the central protuberance of the 50S subunit. The protein is Large ribosomal subunit protein uL5c (rpl5) of Phaeodactylum tricornutum (strain CCAP 1055/1).